A 234-amino-acid polypeptide reads, in one-letter code: tRNA (guanine-N(1)-)-methyltransferase (234 aa).

Residues Gly115 and 135 to 140 contribute to the S-adenosyl-L-methionine site; that span reads VGDYIL.

The protein belongs to the RNA methyltransferase TrmD family. As to quaternary structure, homodimer.

Its subcellular location is the cytoplasm. It catalyses the reaction guanosine(37) in tRNA + S-adenosyl-L-methionine = N(1)-methylguanosine(37) in tRNA + S-adenosyl-L-homocysteine + H(+). Functionally, specifically methylates guanosine-37 in various tRNAs. In Rickettsia typhi (strain ATCC VR-144 / Wilmington), this protein is tRNA (guanine-N(1)-)-methyltransferase.